A 336-amino-acid polypeptide reads, in one-letter code: Holliday junction branch migration complex subunit RuvB (336 aa).

Residues 1-181 (MDRIVEIEKV…FGMDFRLQFY (181 aa)) form a large ATPase domain (RuvB-L) region. ATP contacts are provided by residues leucine 20, arginine 21, glycine 62, lysine 65, threonine 66, threonine 67, 128 to 130 (EDF), arginine 171, tyrosine 181, and arginine 218. A Mg(2+)-binding site is contributed by threonine 66. The tract at residues 182–252 (TSSELSRIVQ…RAKEGLNALG (71 aa)) is small ATPAse domain (RuvB-S). A head domain (RuvB-H) region spans residues 255-336 (SLGFDEMDIR…KIDIEKGLFE (82 aa)). Arginine 309 and arginine 314 together coordinate DNA.

It belongs to the RuvB family. In terms of assembly, homohexamer. Forms an RuvA(8)-RuvB(12)-Holliday junction (HJ) complex. HJ DNA is sandwiched between 2 RuvA tetramers; dsDNA enters through RuvA and exits via RuvB. An RuvB hexamer assembles on each DNA strand where it exits the tetramer. Each RuvB hexamer is contacted by two RuvA subunits (via domain III) on 2 adjacent RuvB subunits; this complex drives branch migration. In the full resolvosome a probable DNA-RuvA(4)-RuvB(12)-RuvC(2) complex forms which resolves the HJ.

Its subcellular location is the cytoplasm. The catalysed reaction is ATP + H2O = ADP + phosphate + H(+). Its function is as follows. The RuvA-RuvB-RuvC complex processes Holliday junction (HJ) DNA during genetic recombination and DNA repair, while the RuvA-RuvB complex plays an important role in the rescue of blocked DNA replication forks via replication fork reversal (RFR). RuvA specifically binds to HJ cruciform DNA, conferring on it an open structure. The RuvB hexamer acts as an ATP-dependent pump, pulling dsDNA into and through the RuvAB complex. RuvB forms 2 homohexamers on either side of HJ DNA bound by 1 or 2 RuvA tetramers; 4 subunits per hexamer contact DNA at a time. Coordinated motions by a converter formed by DNA-disengaged RuvB subunits stimulates ATP hydrolysis and nucleotide exchange. Immobilization of the converter enables RuvB to convert the ATP-contained energy into a lever motion, pulling 2 nucleotides of DNA out of the RuvA tetramer per ATP hydrolyzed, thus driving DNA branch migration. The RuvB motors rotate together with the DNA substrate, which together with the progressing nucleotide cycle form the mechanistic basis for DNA recombination by continuous HJ branch migration. Branch migration allows RuvC to scan DNA until it finds its consensus sequence, where it cleaves and resolves cruciform DNA. In Campylobacter concisus (strain 13826), this protein is Holliday junction branch migration complex subunit RuvB.